The following is an 853-amino-acid chain: DNA mismatch repair protein MutS (853 aa).

614-621 lines the ATP pocket; that stretch reads GPNMGGKS.

The protein belongs to the DNA mismatch repair MutS family.

This protein is involved in the repair of mismatches in DNA. It is possible that it carries out the mismatch recognition step. This protein has a weak ATPase activity. The polypeptide is DNA mismatch repair protein MutS (Escherichia coli O7:K1 (strain IAI39 / ExPEC)).